Reading from the N-terminus, the 173-residue chain is Crossover junction endodeoxyribonuclease RuvC (173 aa).

Catalysis depends on residues D8, E67, and D139. 3 residues coordinate Mg(2+): D8, E67, and D139.

It belongs to the RuvC family. In terms of assembly, homodimer which binds Holliday junction (HJ) DNA. The HJ becomes 2-fold symmetrical on binding to RuvC with unstacked arms; it has a different conformation from HJ DNA in complex with RuvA. In the full resolvosome a probable DNA-RuvA(4)-RuvB(12)-RuvC(2) complex forms which resolves the HJ. The cofactor is Mg(2+).

Its subcellular location is the cytoplasm. The enzyme catalyses Endonucleolytic cleavage at a junction such as a reciprocal single-stranded crossover between two homologous DNA duplexes (Holliday junction).. In terms of biological role, the RuvA-RuvB-RuvC complex processes Holliday junction (HJ) DNA during genetic recombination and DNA repair. Endonuclease that resolves HJ intermediates. Cleaves cruciform DNA by making single-stranded nicks across the HJ at symmetrical positions within the homologous arms, yielding a 5'-phosphate and a 3'-hydroxyl group; requires a central core of homology in the junction. The consensus cleavage sequence is 5'-(A/T)TT(C/G)-3'. Cleavage occurs on the 3'-side of the TT dinucleotide at the point of strand exchange. HJ branch migration catalyzed by RuvA-RuvB allows RuvC to scan DNA until it finds its consensus sequence, where it cleaves and resolves the cruciform DNA. The protein is Crossover junction endodeoxyribonuclease RuvC of Cronobacter sakazakii (strain ATCC BAA-894) (Enterobacter sakazakii).